A 264-amino-acid chain; its full sequence is Thymidylate synthase (264 aa).

Position 21 (arginine 21) interacts with dUMP. Histidine 51 serves as a coordination point for (6R)-5,10-methylene-5,6,7,8-tetrahydrofolate. 126 to 127 provides a ligand contact to dUMP; sequence RR. The active-site Nucleophile is cysteine 146. Residues 166-169, asparagine 177, and 207-209 contribute to the dUMP site; these read RSAD and HLY. Residue aspartate 169 participates in (6R)-5,10-methylene-5,6,7,8-tetrahydrofolate binding. Alanine 263 contributes to the (6R)-5,10-methylene-5,6,7,8-tetrahydrofolate binding site.

The protein belongs to the thymidylate synthase family. Bacterial-type ThyA subfamily. As to quaternary structure, homodimer.

The protein resides in the cytoplasm. It catalyses the reaction dUMP + (6R)-5,10-methylene-5,6,7,8-tetrahydrofolate = 7,8-dihydrofolate + dTMP. It participates in pyrimidine metabolism; dTTP biosynthesis. Its function is as follows. Catalyzes the reductive methylation of 2'-deoxyuridine-5'-monophosphate (dUMP) to 2'-deoxythymidine-5'-monophosphate (dTMP) while utilizing 5,10-methylenetetrahydrofolate (mTHF) as the methyl donor and reductant in the reaction, yielding dihydrofolate (DHF) as a by-product. This enzymatic reaction provides an intracellular de novo source of dTMP, an essential precursor for DNA biosynthesis. In Paramagnetospirillum magneticum (strain ATCC 700264 / AMB-1) (Magnetospirillum magneticum), this protein is Thymidylate synthase.